Here is a 253-residue protein sequence, read N- to C-terminus: Exosome complex component Rrp4 (253 aa).

The 74-residue stretch at 80–153 (GDIVIGIVVD…SRGPILTVQD (74 aa)) folds into the S1 motif domain.

Belongs to the RRP4 family. Component of the archaeal exosome complex. Forms a trimer of Rrp4 and/or Csl4 subunits. The trimer associates with a hexameric ring-like arrangement composed of 3 Rrp41-Rrp42 heterodimers.

Its subcellular location is the cytoplasm. Functionally, non-catalytic component of the exosome, which is a complex involved in RNA degradation. Increases the RNA binding and the efficiency of RNA degradation. Confers strong poly(A) specificity to the exosome. This chain is Exosome complex component Rrp4, found in Ignisphaera aggregans (strain DSM 17230 / JCM 13409 / AQ1.S1).